The primary structure comprises 397 residues: Argininosuccinate synthase (397 aa).

9–17 (AYSGGLDTT) is an ATP binding site. L-citrulline is bound at residue Tyr-87. Gly-117 is an ATP binding site. Residues Thr-119, Asn-123, and Asp-124 each contribute to the L-aspartate site. Asn-123 contacts L-citrulline. Arg-127, Ser-174, Ser-183, Glu-259, and Tyr-271 together coordinate L-citrulline.

This sequence belongs to the argininosuccinate synthase family. Type 1 subfamily. As to quaternary structure, homotetramer.

The protein localises to the cytoplasm. It carries out the reaction L-citrulline + L-aspartate + ATP = 2-(N(omega)-L-arginino)succinate + AMP + diphosphate + H(+). The protein operates within amino-acid biosynthesis; L-arginine biosynthesis; L-arginine from L-ornithine and carbamoyl phosphate: step 2/3. The protein is Argininosuccinate synthase of Pyrobaculum aerophilum (strain ATCC 51768 / DSM 7523 / JCM 9630 / CIP 104966 / NBRC 100827 / IM2).